We begin with the raw amino-acid sequence, 167 residues long: Ribosome maturation factor RimM (167 aa).

The PRC barrel domain maps to Asp94 to Phe166.

It belongs to the RimM family. Binds ribosomal protein uS19.

It localises to the cytoplasm. An accessory protein needed during the final step in the assembly of 30S ribosomal subunit, possibly for assembly of the head region. Essential for efficient processing of 16S rRNA. May be needed both before and after RbfA during the maturation of 16S rRNA. It has affinity for free ribosomal 30S subunits but not for 70S ribosomes. In Chlorobium luteolum (strain DSM 273 / BCRC 81028 / 2530) (Pelodictyon luteolum), this protein is Ribosome maturation factor RimM.